Reading from the N-terminus, the 349-residue chain is Ferredoxin--NADP reductase (349 aa).

FAD-binding residues include Asp-35, Gln-43, Tyr-48, Val-88, Phe-123, Asp-288, and Thr-329.

This sequence belongs to the ferredoxin--NADP reductase type 2 family. As to quaternary structure, homodimer. It depends on FAD as a cofactor.

The catalysed reaction is 2 reduced [2Fe-2S]-[ferredoxin] + NADP(+) + H(+) = 2 oxidized [2Fe-2S]-[ferredoxin] + NADPH. The protein is Ferredoxin--NADP reductase of Colwellia psychrerythraea (strain 34H / ATCC BAA-681) (Vibrio psychroerythus).